Consider the following 270-residue polypeptide: Putative hydro-lyase Reut_A2449 (270 aa).

It belongs to the D-glutamate cyclase family.

This is Putative hydro-lyase Reut_A2449 from Cupriavidus pinatubonensis (strain JMP 134 / LMG 1197) (Cupriavidus necator (strain JMP 134)).